Reading from the N-terminus, the 473-residue chain is tRNA modification GTPase MnmE (473 aa).

Positions 30, 95, and 134 each coordinate (6S)-5-formyl-5,6,7,8-tetrahydrofolate. Positions 230–394 (GVSTVIAGRP…LKLLMASMVE (165 aa)) constitute a TrmE-type G domain. GTP-binding positions include 240 to 245 (NAGKST), 259 to 265 (SHMPGTT), and 284 to 287 (DTAG). Mg(2+) is bound by residues Ser-244 and Thr-265. Lys-473 provides a ligand contact to (6S)-5-formyl-5,6,7,8-tetrahydrofolate.

The protein belongs to the TRAFAC class TrmE-Era-EngA-EngB-Septin-like GTPase superfamily. TrmE GTPase family. As to quaternary structure, homodimer. Heterotetramer of two MnmE and two MnmG subunits. K(+) serves as cofactor.

The protein localises to the cytoplasm. Exhibits a very high intrinsic GTPase hydrolysis rate. Involved in the addition of a carboxymethylaminomethyl (cmnm) group at the wobble position (U34) of certain tRNAs, forming tRNA-cmnm(5)s(2)U34. The polypeptide is tRNA modification GTPase MnmE (Chlorobium luteolum (strain DSM 273 / BCRC 81028 / 2530) (Pelodictyon luteolum)).